Consider the following 166-residue polypeptide: Peptidyl-prolyl cis-trans isomerase-like 1 (166 aa).

The 155-residue stretch at Gln10–Pro164 folds into the PPIase cyclophilin-type domain. Cyclosporin A is bound by residues His54–Gly65, Thr70–Gly71, Ala99–Gly104, Gly109–Phe113, Thr119, and Lys125. Ser149 is subject to Phosphoserine.

This sequence belongs to the cyclophilin-type PPIase family. PPIL1 subfamily. In terms of assembly, identified in the spliceosome C complex. Interacts with SNW1/SKIP. Interacts with CDC40/PRP17; this interaction leads to CDC40 isomerization. Interacts with RBM22.

The protein resides in the nucleus. It catalyses the reaction [protein]-peptidylproline (omega=180) = [protein]-peptidylproline (omega=0). Its activity is regulated as follows. Inhibited by Cyclosporin A. Functionally, involved in pre-mRNA splicing as component of the spliceosome. PPIases accelerate the folding of proteins. It catalyzes the cis-trans isomerization of proline imidic peptide bonds in oligopeptides. Catalyzes prolyl peptide bond isomerization in CDC40/PRP17. Plays an important role in embryonic brain development; this function is independent of its isomerase activity. This chain is Peptidyl-prolyl cis-trans isomerase-like 1 (PPIL1), found in Bos taurus (Bovine).